Consider the following 140-residue polypeptide: HTH-type transcriptional regulator AdhR (140 aa).

The 69-residue stretch at 1–69 folds into the HTH merR-type domain; it reads MNIAQVAKQF…IEALIEYTTL (69 aa). The segment at residues 3-22 is a DNA-binding region (H-T-H motif); that stretch reads IAQVAKQFGLTAATLRYYER. A coiled-coil region spans residues 75–125; the sequence is RTVEARKNILADERQRLIEKRKEIDETIKRLDTKIKDYDGKLRENEAKLKS. The disordered stretch occupies residues 120–140; that stretch reads EAKLKSRPKTESLHGSVEQRR.

Transcriptional regulator involved in the response to aldehyde stress. Binds to the promoter region of the adhA-yraA operon, the yraC and its own promoter region; binding is unchanged in the presence of aldehydes. This Bacillus subtilis (strain 168) protein is HTH-type transcriptional regulator AdhR (adhR).